The primary structure comprises 118 residues: MSLIILTRDDEPRIFTPDSDAASPALHSTSPLPDPASASPLHREEKILPKVCNIVSCLSFSLPASPTDSGLASPTIITREGQQFWAKCLIWKYQLYLHGLHKKSDGRRDKQISASPST.

The segment at 1–39 is disordered; that stretch reads MSLIILTRDDEPRIFTPDSDAASPALHSTSPLPDPASAS. The segment covering 28-39 has biased composition (low complexity); the sequence is STSPLPDPASAS.

In terms of tissue distribution, mainly expressed in placenta.

This is Down syndrome critical region protein 4 (DSCR4) from Homo sapiens (Human).